Here is a 105-residue protein sequence, read N- to C-terminus: Small ribosomal subunit protein uS10 (105 aa).

Belongs to the universal ribosomal protein uS10 family. Part of the 30S ribosomal subunit.

Involved in the binding of tRNA to the ribosomes. This Rickettsia prowazekii (strain Madrid E) protein is Small ribosomal subunit protein uS10.